The chain runs to 188 residues: dCTP deaminase (188 aa).

DCTP-binding positions include 111–116 (KSTYAR), 135–137 (TLE), Gln-156, Tyr-170, and Gln-180. The active-site Proton donor/acceptor is the Glu-137.

The protein belongs to the dCTP deaminase family. Homotrimer.

It catalyses the reaction dCTP + H2O + H(+) = dUTP + NH4(+). Its pathway is pyrimidine metabolism; dUMP biosynthesis; dUMP from dCTP (dUTP route): step 1/2. In terms of biological role, catalyzes the deamination of dCTP to dUTP. The polypeptide is dCTP deaminase (Pseudomonas fluorescens (strain Pf0-1)).